The sequence spans 334 residues: F-box only protein 16 (334 aa).

The F-box domain maps to 86–132 (LDFTTKLPRVLSVYIFSFLDPRSLCRCAQVSWYWKSLAELDQLWMLK). Disordered regions lie at residues 168 to 222 (PKTP…WRSS) and 314 to 334 (LEHLQKHPGLQSPSPRLQSQS). Residues 194-204 (SPSLAFRSSSS) are compositionally biased toward low complexity. Basic and acidic residues predominate over residues 210–222 (NPGEKELPPWRSS). Positions 323–334 (LQSPSPRLQSQS) are enriched in low complexity.

As to quaternary structure, part of a SCF (SKP1-cullin-F-box) protein ligase complex.

In terms of biological role, probably recognizes and binds to some phosphorylated proteins and promotes their ubiquitination and degradation. The protein is F-box only protein 16 (Fbxo16) of Mus musculus (Mouse).